The sequence spans 37 residues: CNSKGTPCTNADECCGGKCAYNVWNCIGGGCSKTCGY.

Cystine bridges form between C1–C15, C8–C19, C14–C35, and C26–C31.

It belongs to the neurotoxin 13 (insecticidal toxin ABC) family. 01 (Aps III) subfamily. In terms of tissue distribution, expressed by the venom gland.

The protein resides in the secreted. In terms of biological role, the recombinant mu-cyrtautoxin-As1a potently and voltage-independently blocks voltage-gated sodium channels (Nav) of insects. It acts by pluging the outer vestibule of the channel. It acts in combination with a weak (30%) voltage-independent block of insect voltage-gated calcium (Cav) channels (low-voltage and high-voltage channels). Tested on DUM neurons, it inhibits sodium currents with an IC(50) of 540 nM (and a Hill coefficient &gt;1, reflecting an incomplete block at higher concentrations). In vivo, it induces flaccid paralysis in adult Australian sheep blowfly Lucilia cuprina. It is both paralytic and lethal, when injected into lepidopteran larvae. It is a slower acting toxin, being lethal at 24 hours, but not paralytic at 1 hour post-injection. This is Mu-cyrtautoxin-As1a from Apomastus schlingeri (Trap-door spider).